We begin with the raw amino-acid sequence, 34 residues long: MSDINTARLPLFLPPVRMPPCVGDDIEMVLTRGE.

A propeptide spanning residues 1-10 is cleaved from the precursor; it reads MSDINTARLP. Positions 11–20 form a cross-link, cyclopeptide (Leu-Pro); the sequence is LFLPPVRMPP. The propeptide occupies 21-34; the sequence is CVGDDIEMVLTRGE.

The protein belongs to the MSDIN fungal toxin family. In terms of processing, processed by the macrocyclase-peptidase enzyme POPB to yield a toxic cyclic decapeptide. POPB first removes 10 residues from the N-terminus. Conformational trapping of the remaining peptide forces the enzyme to release this intermediate rather than proceed to macrocyclization. The enzyme rebinds the remaining peptide in a different conformation and catalyzes macrocyclization of the N-terminal 10 residues.

Functionally, probable toxin that belongs to the MSDIN-like toxin family responsible for a large number of food poisoning cases and deaths. This Amanita bisporigera (Destroying angel) protein is MSDIN-like toxin proprotein 4.